Here is a 712-residue protein sequence, read N- to C-terminus: Phosphomethylpyrimidine synthase (712 aa).

Positions 14–49 (AIDITAPESTIPNKSKVPNKSAESSQSTVPKAPSRR) are disordered. Positions 20–42 (PESTIPNKSKVPNKSAESSQSTV) are enriched in polar residues. Residues N283, M312, Y341, H377, 397-399 (SRG), 438-441 (DGMR), and E477 each bind substrate. Residue H481 coordinates Zn(2+). Position 504 (Y504) interacts with substrate. H545 contributes to the Zn(2+) binding site. [4Fe-4S] cluster is bound by residues C625, C628, and C633.

This sequence belongs to the ThiC family. As to quaternary structure, homodimer. The cofactor is [4Fe-4S] cluster.

It carries out the reaction 5-amino-1-(5-phospho-beta-D-ribosyl)imidazole + S-adenosyl-L-methionine = 4-amino-2-methyl-5-(phosphooxymethyl)pyrimidine + CO + 5'-deoxyadenosine + formate + L-methionine + 3 H(+). Its pathway is cofactor biosynthesis; thiamine diphosphate biosynthesis. In terms of biological role, catalyzes the synthesis of the hydroxymethylpyrimidine phosphate (HMP-P) moiety of thiamine from aminoimidazole ribotide (AIR) in a radical S-adenosyl-L-methionine (SAM)-dependent reaction. The polypeptide is Phosphomethylpyrimidine synthase (Shewanella putrefaciens (strain CN-32 / ATCC BAA-453)).